The chain runs to 400 residues: Acetate kinase (400 aa).

N7 is a Mg(2+) binding site. K14 serves as a coordination point for ATP. Position 91 (R91) interacts with substrate. The active-site Proton donor/acceptor is D148. ATP is bound by residues H208–G212, D284–R286, and G332–N336. Position 384 (E384) interacts with Mg(2+).

This sequence belongs to the acetokinase family. As to quaternary structure, homodimer. Mg(2+) serves as cofactor. Requires Mn(2+) as cofactor.

It is found in the cytoplasm. It carries out the reaction acetate + ATP = acetyl phosphate + ADP. It participates in metabolic intermediate biosynthesis; acetyl-CoA biosynthesis; acetyl-CoA from acetate: step 1/2. In terms of biological role, catalyzes the formation of acetyl phosphate from acetate and ATP. Can also catalyze the reverse reaction. This chain is Acetate kinase, found in Coprothermobacter proteolyticus (strain ATCC 35245 / DSM 5265 / OCM 4 / BT).